The following is a 152-amino-acid chain: Ubiquitin-conjugating enzyme E2 2 (152 aa).

The UBC core domain maps to P4 to T150. The active-site Glycyl thioester intermediate is the C88.

The protein belongs to the ubiquitin-conjugating enzyme family.

It catalyses the reaction S-ubiquitinyl-[E1 ubiquitin-activating enzyme]-L-cysteine + [E2 ubiquitin-conjugating enzyme]-L-cysteine = [E1 ubiquitin-activating enzyme]-L-cysteine + S-ubiquitinyl-[E2 ubiquitin-conjugating enzyme]-L-cysteine.. Its pathway is protein modification; protein ubiquitination. Its function is as follows. Catalyzes the covalent attachment of ubiquitin to other proteins. In Triticum aestivum (Wheat), this protein is Ubiquitin-conjugating enzyme E2 2 (UBC2).